Consider the following 179-residue polypeptide: MSRIGKKPIPVPEKVAVTLDGLLVTVKGPKGELTRTLPEGVTIDQTDGLIIVSADSEKRKSRERHGLSRTLVANMIEGVNNGYSKQLEIVGVGSRAQVKGKTLVVSAGYSHPVEVIPPEGITFKVENNTNVLVSGIDKELVGNEAAKIRAIRPPEPYKGKGIKYLGERILRKAGKSGKK.

Belongs to the universal ribosomal protein uL6 family. As to quaternary structure, part of the 50S ribosomal subunit.

Its function is as follows. This protein binds to the 23S rRNA, and is important in its secondary structure. It is located near the subunit interface in the base of the L7/L12 stalk, and near the tRNA binding site of the peptidyltransferase center. The sequence is that of Large ribosomal subunit protein uL6 from Prochlorococcus marinus (strain SARG / CCMP1375 / SS120).